A 178-amino-acid chain; its full sequence is Large ribosomal subunit protein uL6 (178 aa).

The protein belongs to the universal ribosomal protein uL6 family. Part of the 50S ribosomal subunit.

This protein binds to the 23S rRNA, and is important in its secondary structure. It is located near the subunit interface in the base of the L7/L12 stalk, and near the tRNA binding site of the peptidyltransferase center. The polypeptide is Large ribosomal subunit protein uL6 (Helicobacter pylori (strain HPAG1)).